Reading from the N-terminus, the 2188-residue chain is Genome polyprotein (2188 aa).

Glycine 2 carries the N-myristoyl glycine; by host lipid modification. Topologically, residues 2-1503 are cytoplasmic; sequence GAQVTRQQTG…HISRAFITLQ (1502 aa). The N-acetylneuraminate site is built by aspartate 408, arginine 412, proline 548, aspartate 549, isoleucine 550, arginine 834, proline 838, and asparagine 839. Active-site for protease 2A activity residues include histidine 879 and aspartate 897. Zn(2+)-binding residues include cysteine 914 and cysteine 916. Catalysis depends on cysteine 968, which acts as the For protease 2A activity. Residues cysteine 974 and histidine 976 each contribute to the Zn(2+) site. A membrane-binding region spans residues 1108-1180; the sequence is SESWLKKFTE…EHSCPTTERQ (73 aa). Positions 1108–1246 are oligomerization; sequence SESWLKKFTE…SPGTGKSVAS (139 aa). The RNA-binding stretch occupies residues 1129-1133; it reads SQKID. The SF3 helicase domain maps to 1212–1370; it reads EKKINNYIQF…YKDSNKLDMS (159 aa). Residue 1236–1243 coordinates ATP; it reads GSPGTGKS. Zn(2+)-binding residues include cysteine 1376, cysteine 1389, and cysteine 1394. A C4-type; degenerate zinc finger spans residues 1376-1394; sequence CKPDNCTPTNYKRCCPLIC. Residues 1421-1428 are RNA-binding; sequence EYRTRNST. The tract at residues 1432 to 1437 is oligomerization; that stretch reads LEALFQ. Residues 1504–1519 lie within the membrane without spanning it; that stretch reads AIATFVSIAGVVYVIY. The Cytoplasmic segment spans residues 1520-2188; the sequence is KLFAGIQGPY…SLRRKWLDSF (669 aa). Tyrosine 1529 bears the O-(5'-phospho-RNA)-tyrosine mark. In terms of domain architecture, Peptidase C3 spans 1549–1727; that stretch reads GPGFDFAQAI…FAAMLLHSYF (179 aa). Residues histidine 1588, glutamate 1619, and cysteine 1695 each act as for protease 3C activity in the active site. The RdRp catalytic domain occupies 1954–2069; that stretch reads GEIFAFDYTG…SYPHKIDPGL (116 aa). Mg(2+)-binding residues include aspartate 1960 and aspartate 2055.

Belongs to the picornaviruses polyprotein family. In terms of assembly, interacts with capsid protein VP1 and capsid protein VP3 to form heterotrimeric protomers. Interacts with capsid protein VP0, and capsid protein VP3 to form heterotrimeric protomers. Five protomers subsequently associate to form pentamers which serve as building blocks for the capsid. Interacts with capsid protein VP2, capsid protein VP3 and capsid protein VP4 following cleavage of capsid protein VP0. As to quaternary structure, interacts with capsid protein VP1 and capsid protein VP3 in the mature capsid. In terms of assembly, interacts with capsid protein VP0 and capsid protein VP1 to form heterotrimeric protomers. Five protomers subsequently associate to form pentamers which serve as building blocks for the capsid. Interacts with capsid protein VP4 in the mature capsid. Interacts with protein 2C; this interaction may be important for virion morphogenesis. Interacts with host IRF7. Interacts with capsid protein VP1 and capsid protein VP3. As to quaternary structure, homodimer. In terms of assembly, homohexamer; forms a hexameric ring structure with 6-fold symmetry characteristic of AAA+ ATPases. Interacts (via N-terminus) with host RTN3 (via reticulon domain); this interaction is important for viral replication. Interacts with capsid protein VP3; this interaction may be important for virion morphogenesis. Interacts with protein 3CD. As to quaternary structure, homodimer. Interacts with host GBF1. Interacts (via GOLD domain) with host ACBD3 (via GOLD domain); this interaction allows the formation of a viral protein 3A/ACBD3 heterotetramer with a 2:2 stoichiometry, which will stimulate the recruitment of host PI4KB in order to synthesize PI4P at the viral RNA replication sites. In terms of assembly, interacts with RNA-directed RNA polymerase. Interacts with host IFIH1/MDA5; this interaction inhibits host IFIH1. As to quaternary structure, interacts with protein 3AB and with RNA-directed RNA polymerase. In terms of assembly, interacts with Viral protein genome-linked and with protein 3CD. It depends on Mg(2+) as a cofactor. In terms of processing, specific enzymatic cleavages in vivo by the viral proteases yield processing intermediates and the mature proteins. Myristoylation is required for the formation of pentamers during virus assembly. Further assembly of 12 pentamers and a molecule of genomic RNA generates the provirion. Post-translationally, during virion maturation, immature virions are rendered infectious following cleavage of VP0 into VP4 and VP2. This maturation seems to be an autocatalytic event triggered by the presence of RNA in the capsid and it is followed by a conformational change infectious virion. In terms of processing, myristoylation is required during RNA encapsidation and formation of the mature virus particle. VPg is uridylylated by the polymerase into VPg-pUpU. This acts as a nucleotide-peptide primer for the genomic RNA replication.

It is found in the virion. The protein resides in the host cytoplasm. It localises to the host cytoplasmic vesicle membrane. Its subcellular location is the host nucleus. It carries out the reaction a ribonucleoside 5'-triphosphate + H2O = a ribonucleoside 5'-diphosphate + phosphate + H(+). It catalyses the reaction Selective cleavage of Tyr-|-Gly bond in the picornavirus polyprotein.. The catalysed reaction is RNA(n) + a ribonucleoside 5'-triphosphate = RNA(n+1) + diphosphate. The enzyme catalyses Selective cleavage of Gln-|-Gly bond in the poliovirus polyprotein. In other picornavirus reactions Glu may be substituted for Gln, and Ser or Thr for Gly.. Functionally, component of immature procapsids, which is cleaved into capsid proteins VP4 and VP2 after maturation. Allows the capsid to remain inactive before the maturation step. Its function is as follows. Forms an icosahedral capsid of pseudo T=3 symmetry with capsid proteins VP2 and VP3. The capsid is 300 Angstroms in diameter, composed of 60 copies of each capsid protein and enclosing the viral positive strand RNA genome. Capsid protein VP1 mainly forms the vertices of the capsid. Capsid protein VP1, together with VP3, interacts with host cell sialic acids to provide virion attachment to target host cells. This attachment induces virion internalization. After binding to its receptor, the capsid undergoes conformational changes. Capsid protein VP1 N-terminus (that contains an amphipathic alpha-helix) and capsid protein VP4 are externalized. Together, they shape a pore in the host membrane through which viral genome is translocated to host cell cytoplasm. Forms an icosahedral capsid of pseudo T=3 symmetry with capsid proteins VP2 and VP3. The capsid is 300 Angstroms in diameter, composed of 60 copies of each capsid protein and enclosing the viral positive strand RNA genome. In terms of biological role, forms an icosahedral capsid of pseudo T=3 symmetry with capsid proteins VP2 and VP3. The capsid is 300 Angstroms in diameter, composed of 60 copies of each capsid protein and enclosing the viral positive strand RNA genome. Capsid protein VP3, together with VP1, interacts with host cell sialic acids to provide virion attachment to target host cells. In addition, inhibits the phosphorylation and nuclear translocation of host IRF7 and thereby suppresses downstream interferon production. Functionally, lies on the inner surface of the capsid shell. After binding to the host receptor, the capsid undergoes conformational changes. Capsid protein VP4 is released, Capsid protein VP1 N-terminus is externalized, and together, they shape a pore in the host membrane through which the viral genome is translocated into the host cell cytoplasm. Its function is as follows. Cysteine protease that cleaves viral polyprotein and specific host proteins. It is responsible for the autocatalytic cleavage between the P1 and P2 regions, which is the first cleavage occurring in the polyprotein. Also cleaves the host translation initiation factor EIF4G1, in order to shut down the capped cellular mRNA translation. Inhibits the host nucleus-cytoplasm protein and RNA trafficking by cleaving host members of the nuclear pores. Counteracts stress granule formation probably by antagonizing its assembly or promoting its dissassembly. Also plays a role in the suppression of host innate immunity through cleavage of host TRAF3, a component of the signaling cascade required to produce type I interferons. Plays an essential role in the virus replication cycle by acting as a viroporin. Creates a pore in the host endoplasmic reticulum and as a consequence releases Ca2+ in the cytoplasm of infected cell. In turn, high levels of cytoplasmic calcium may trigger membrane trafficking and transport of viral ER-associated proteins to viroplasms, sites of viral genome replication. In terms of biological role, induces and associates with structural rearrangements of intracellular membranes. Displays RNA-binding, nucleotide binding and NTPase activities. May play a role in virion morphogenesis and viral RNA encapsidation by interacting with the capsid protein VP3. Functionally, localizes the viral replication complex to the surface of membranous vesicles. Together with protein 3CD binds the Cis-Active RNA Element (CRE) which is involved in RNA synthesis initiation. Acts as a cofactor to stimulate the activity of 3D polymerase, maybe through a nucleid acid chaperone activity. Its function is as follows. Localizes the viral replication complex to the surface of membranous vesicles. It inhibits host cell endoplasmic reticulum-to-Golgi apparatus transport and causes the disassembly of the Golgi complex, possibly through GBF1 interaction. This would result in depletion of MHC, trail receptors and IFN receptors at the host cell surface. Plays an essential role in viral RNA replication by recruiting ACBD3 and PI4KB at the viral replication sites, thereby allowing the formation of the rearranged membranous structures where viral replication takes place. Acts as a primer for viral RNA replication and remains covalently bound to viral genomic RNA. VPg is uridylylated prior to priming replication into VPg-pUpU. The oriI viral genomic sequence may act as a template for this. The VPg-pUpU is then used as primer on the genomic RNA poly(A) by the RNA-dependent RNA polymerase to replicate the viral genome. During genome replication, the VPg-RNA linkage is removed by the host TDP2, thereby accelerating replication. During the late stage of the replication cycle, host TDP2 is excluded from sites of viral RNA synthesis and encapsidation, allowing for the generation of progeny virions. In terms of biological role, involved in the viral replication complex and viral polypeptide maturation. It exhibits protease activity with a specificity and catalytic efficiency that is different from protease 3C. Protein 3CD lacks polymerase activity. Protein 3CD binds to the 5'UTR of the viral genome. Functionally, major viral protease that mediates proteolytic processing of the polyprotein. Cleaves host EIF5B, contributing to host translation shutoff. Also cleaves host PABPC1, contributing to host translation shutoff. Binds and inhibits host IFIH1/MDA5, thereby inhibiting the type-I IFN production and the establishment of the antiviral state. Cleaves host MAP3K7/TAK1, resulting in inhibition of TRAF6-triggered NF-kappa-B induction. Cleaves host TICAM1; this interaction allows the virus to disrupt host TLR3 signaling. Cleaves host IRF7, resulting in inhibition of type-I IFN production. Cleaves host NLRP1, triggers host N-glycine-mediated degradation of the autoinhibitory NLRP1 N-terminal fragment. Its function is as follows. Replicates the viral genomic RNA on the surface of intracellular membranes. May form linear arrays of subunits that propagate along a strong head-to-tail interaction called interface-I. Covalently attaches UMP to a tyrosine of VPg, which is used to prime RNA synthesis. The positive stranded RNA genome is first replicated at virus induced membranous vesicles, creating a dsRNA genomic replication form. This dsRNA is then used as template to synthesize positive stranded RNA genomes. ss(+)RNA genomes are either translated, replicated or encapsidated. The protein is Genome polyprotein of Human enterovirus D68 (EV68).